Consider the following 264-residue polypeptide: Acetylglutamate kinase (264 aa).

Residues 40-41, R62, and N158 contribute to the substrate site; that span reads GG.

It belongs to the acetylglutamate kinase family. ArgB subfamily.

The protein resides in the cytoplasm. The enzyme catalyses N-acetyl-L-glutamate + ATP = N-acetyl-L-glutamyl 5-phosphate + ADP. The protein operates within amino-acid biosynthesis; L-arginine biosynthesis; N(2)-acetyl-L-ornithine from L-glutamate: step 2/4. Its function is as follows. Catalyzes the ATP-dependent phosphorylation of N-acetyl-L-glutamate. The chain is Acetylglutamate kinase from Cytophaga hutchinsonii (strain ATCC 33406 / DSM 1761 / CIP 103989 / NBRC 15051 / NCIMB 9469 / D465).